A 123-amino-acid polypeptide reads, in one-letter code: DNA-directed RNA polymerase subunit omega (123 aa).

Positions 67–123 (EESAADSLSLGGFSTADVEAEVGGGPVQPDPGASQERAFDEAADGTAQGSGDPDPTT) are disordered.

This sequence belongs to the RNA polymerase subunit omega family. The RNAP catalytic core consists of 2 alpha, 1 beta, 1 beta' and 1 omega subunit. When a sigma factor is associated with the core the holoenzyme is formed, which can initiate transcription.

The catalysed reaction is RNA(n) + a ribonucleoside 5'-triphosphate = RNA(n+1) + diphosphate. Functionally, promotes RNA polymerase assembly. Latches the N- and C-terminal regions of the beta' subunit thereby facilitating its interaction with the beta and alpha subunits. This Halorhodospira halophila (strain DSM 244 / SL1) (Ectothiorhodospira halophila (strain DSM 244 / SL1)) protein is DNA-directed RNA polymerase subunit omega.